The primary structure comprises 67 residues: Prokaryotic ubiquitin-like protein Pup (67 aa).

The tract at residues 1–36 (MPQQFEQPQAQQAATQEDDALATTQAAAQTESADQA) is disordered. The segment at 23–61 (TTQAAAQTESADQADVLDDILDDIESTLETNAEEYVNSF) is ARC ATPase binding. Glutamate 67 participates in a covalent cross-link: Isoglutamyl lysine isopeptide (Glu-Lys) (interchain with K-? in acceptor proteins).

It belongs to the prokaryotic ubiquitin-like protein family. As to quaternary structure, strongly interacts with the proteasome-associated ATPase ARC through a hydrophobic interface; the interacting region of Pup lies in its C-terminal half. There is one Pup binding site per ARC hexamer ring.

Its pathway is protein degradation; proteasomal Pup-dependent pathway. Functionally, protein modifier that is covalently attached to lysine residues of substrate proteins, thereby targeting them for proteasomal degradation. The tagging system is termed pupylation. The protein is Prokaryotic ubiquitin-like protein Pup of Bifidobacterium longum (strain DJO10A).